The primary structure comprises 143 residues: Dehydrin DHN2 (143 aa).

Positions 1 to 10 are enriched in polar residues; the sequence is MEYQGQTGHA. Positions 1–143 are disordered; the sequence is MEYQGQTGHA…IKEKLPGGQH (143 aa). The span at 24–34 shows a compositional bias: gly residues; the sequence is GHGGATGGPTG. Positions 35 to 46 are enriched in low complexity; it reads THGAAAAAAGTG. Residues 51-61 show a composition bias toward basic and acidic residues; that stretch reads TRDDHKTDGVL. Residues 62-71 show a composition bias toward low complexity; it reads RRSGSSSSSS. The span at 86-101 shows a compositional bias: basic and acidic residues; the sequence is KEKIKEKLPGGAHKDA. Over residues 109-123 the composition is skewed to low complexity; the sequence is AAGEYAGTGTHGAEA. Residues 124 to 143 are compositionally biased toward basic and acidic residues; it reads TGEKKGVMDKIKEKLPGGQH.

Belongs to the plant dehydrin family.

The polypeptide is Dehydrin DHN2 (DHN2) (Hordeum vulgare (Barley)).